The chain runs to 40 residues: Small polypeptide DEVIL 6 (40 aa).

Residues 9–40 (SSSRGLGGVLREQRAKLYIIKRCVVMLLCWQD) are required for DVL/RTFL small polypeptide activity. The chain crosses the membrane as a helical span at residues 12–28 (RGLGGVLREQRAKLYII).

This sequence belongs to the DVL/RTFL small polypeptides family.

The protein resides in the cell membrane. Its function is as follows. Small polypeptide acting as a regulatory molecule which coordinates cellular responses required for differentiation, growth and development, probably by restricting polar cell proliferation in lateral organs and coordinating socket cell recruitment and differentiation at trichome sites. This is Small polypeptide DEVIL 6 from Arabidopsis thaliana (Mouse-ear cress).